Consider the following 444-residue polypeptide: Putative methylesterase 15, chloroplastic (444 aa).

Positions 1-27 (MGNSLRCISQEQDPNQKKPSSVVNGNS) are enriched in polar residues. 2 disordered regions span residues 1–36 (MGNS…RRLS) and 48–91 (PSLS…DSLI). A chloroplast-targeting transit peptide spans 1 to 58 (MGNSLRCISQEQDPNQKKPSSVVNGNSSEKHVRRLSLIPSFRRRTLLPSLSCSGSSTS). The span at 53-63 (SGSSTSSTSKK) shows a compositional bias: low complexity. The span at 64–80 (GGIKTKKKIRERHHQEQ) shows a compositional bias: basic residues. Residues 81-90 (HHHDHEKDSL) are compositionally biased toward basic and acidic residues. Residues 188–312 (FVLVHGGGFG…QPDSNYDLME (125 aa)) enclose the AB hydrolase-1 domain. The active-site Acyl-ester intermediate is Asp262. Active-site charge relay system residues include Asp390 and His418.

Belongs to the AB hydrolase superfamily. Methylesterase family.

Its subcellular location is the plastid. It is found in the chloroplast. Functionally, putative methylesterase. The polypeptide is Putative methylesterase 15, chloroplastic (Arabidopsis thaliana (Mouse-ear cress)).